The chain runs to 430 residues: Histidinol dehydrogenase (430 aa).

Residues Tyr130, Gln191, and Asn214 each coordinate NAD(+). Ser237, Gln259, and His262 together coordinate substrate. Positions 259 and 262 each coordinate Zn(2+). Catalysis depends on proton acceptor residues Glu327 and His328. His328, Asp361, Glu415, and His420 together coordinate substrate. Residue Asp361 coordinates Zn(2+). His420 lines the Zn(2+) pocket.

Belongs to the histidinol dehydrogenase family. The cofactor is Zn(2+).

The enzyme catalyses L-histidinol + 2 NAD(+) + H2O = L-histidine + 2 NADH + 3 H(+). It participates in amino-acid biosynthesis; L-histidine biosynthesis; L-histidine from 5-phospho-alpha-D-ribose 1-diphosphate: step 9/9. Functionally, catalyzes the sequential NAD-dependent oxidations of L-histidinol to L-histidinaldehyde and then to L-histidine. The chain is Histidinol dehydrogenase (hisD) from Zymomonas mobilis subsp. mobilis (strain ATCC 31821 / ZM4 / CP4).